A 204-amino-acid chain; its full sequence is Partner of Y14 and mago (204 aa).

Disordered stretches follow at residues 1–121 and 133–153; these read MGSR…QSVN and SSNNDVCGGAPNPGTTGEDVE. A compositionally biased stretch (basic and acidic residues) spans 7–36; that stretch reads EQGKRMAELSKNLKEGERILEPTRRPDGTL. Positions 104–121 are enriched in polar residues; sequence KANSSEDGSASNGSQSVN. Positions 195-200 match the Nuclear export signal motif; it reads ELKALE.

It belongs to the pym family. As to quaternary structure, interacts with MAGO and Y14. Expressed in root and shoot meristems, cotyledons, vascular tissues of leaves, receptacle of flowers and siliques, and pollen grains.

It is found in the cytoplasm. The protein localises to the nucleus. The protein resides in the nucleolus. It localises to the nucleoplasm. In terms of biological role, key regulator of the exon junction complex (EJC), a multiprotein complex that associates immediately upstream of the exon-exon junction on mRNAs and serves as a positional landmark for the intron exon structure of genes and directs post-transcriptional processes in the cytoplasm such as mRNA export, nonsense-mediated mRNA decay (NMD) or translation. Acts as an EJC disassembly factor, allowing translation-dependent EJC removal and recycling by disrupting mature EJC from spliced mRNAs. Can increase in vitro the expression from reporter constructs that contain leader introns required for the expression of different genes. In association with MAGO and PYM, participates in intron-mediated enhancement of gene expression. The polypeptide is Partner of Y14 and mago (Arabidopsis thaliana (Mouse-ear cress)).